The following is a 529-amino-acid chain: Delayed-rectifier potassium channel regulatory subunit KCNS1 (529 aa).

Residues 1–217 (MLMLLVRGTH…LTMENPGYSL (217 aa)) are Cytoplasmic-facing. The chain crosses the membrane as a helical span at residues 218-239 (PSKLFSCVSIGVVLASIAAMCI). The Extracellular segment spans residues 240–270 (HSLPEYQAREAAAAVATVAAGRSAEDVRDDP). The helical transmembrane segment at 271–293 (VLRRLEYFCIAWFSFEVSSRLLL) threads the bilayer. The Cytoplasmic segment spans residues 294-304 (APSTRNFFCHP). Residues 305 to 322 (LNLIDIVSVLPFYLTLLA) form a helical membrane-spanning segment. Topologically, residues 323-342 (SVALGGNNHGGTSGEELGHL) are extracellular. The helical; Voltage-sensor transmembrane segment at 343-363 (GKVVQVFRLMRIFRVLKLARH) threads the bilayer. Residues 364–378 (STGLRSLGATLKHSY) lie on the Cytoplasmic side of the membrane. The chain crosses the membrane as a helical span at residues 379 to 400 (REVGILLLYLAVGVSVFSGVAY). Residues 401–413 (TAEKEEDVGFDTI) lie on the Extracellular side of the membrane. Positions 414–425 (PACWWWGTVSMT) form an intramembrane region, helical. The Selectivity filter motif lies at 426 to 431 (TVGYGD). An intramembrane segment occupies 426-433 (TVGYGDVV). At 434-440 (PVTLAGK) the chain is on the extracellular side. Residues 441–469 (LAASGCILGGILVVALPITIIFNKFSHFY) form a helical membrane-spanning segment. At 470-529 (QRQKALEAAVRNSGHREFEDLLSSVDGVSDASLETSRETSQEGRSADLEAPSESPKPQIY) the chain is on the cytoplasmic side. Residues 498–529 (SDASLETSRETSQEGRSADLEAPSESPKPQIY) form a disordered region. Positions 504-516 (TSRETSQEGRSAD) are enriched in basic and acidic residues.

Belongs to the potassium channel family. S (TC 1.A.1.2) subfamily. Kv9.1/KCNS1 sub-subfamily. Heterotetramer with KCNB1. Heterotetramer with KCNB2. Does not form homomultimers.

The protein localises to the cell membrane. In terms of biological role, potassium channel regulatory subunit that modulate the delayed rectifier voltage-gated potassium channel activity of KCNB1 and KCNB2 by altering their kinetics, expression levels, and shifting the half-inactivation potential to more polarized values. While it does not form functional channels on its own, it can form functional heterotetrameric channels with KCNB1 and KCNB2. Each regulatory subunit has unique regulatory properties that can lead to extensive inhibition, significant changes in kinetics, and/or substantial shifts in the voltage dependencies of the inactivation process. This chain is Delayed-rectifier potassium channel regulatory subunit KCNS1, found in Lemur catta (Ring-tailed lemur).